Here is a 544-residue protein sequence, read N- to C-terminus: MAKDIKFSEEARRSMLRGVDTLANAVKVTLGPKGRNVVLEKKFGSPLITNDGVTIAKEIELEDAFENMGAKLVAEVASKTNDVAGDGTTTATVLAQAMIREGLKNVTAGANPMGLRKGIEKAVVAAVEELKTISKPIEGKSSIAQVAAISAADEEVGQLIAEAMERVGNDGVITLEESKGFTTELDVVEGMQFDRGYASPYMITDSDKMEAVLDNPYILITDKKISNIQEILPVLEQVVQQGKPLLIIAEDVEGEALATLVVNKLRGTFNVVAVKAPGFGDRRKAMLEDIAILTGGEVITEELGRDLKSATVESLGRAGKVVVTKENTTVVEGVGSTEQIEARIGQIRAQLEETTSEFDREKLQERLAKLAGGVAVIKVGAATETELKERKLRIEDALNSTRAAVEEGIVAGGGTSLMNVYTKVASIVAEGDEATGINIVLRALEEPVRQIAINAGLEGSVVVERLKGEKVGVGFNAATGEWVNMLETGIVDPAKVTRSALQNAASVAAMFLTTEAVVADKPEPNAPAMPDMGGMGMGGMGGMM.

Residues 29 to 32, 86 to 90, G413, 476 to 478, and D492 each bind ATP; these read TLGP, DGTTT, and NAA.

The protein belongs to the chaperonin (HSP60) family. In terms of assembly, forms a cylinder of 14 subunits composed of two heptameric rings stacked back-to-back. Interacts with the co-chaperonin GroES.

The protein localises to the cytoplasm. The catalysed reaction is ATP + H2O + a folded polypeptide = ADP + phosphate + an unfolded polypeptide.. In terms of biological role, together with its co-chaperonin GroES, plays an essential role in assisting protein folding. The GroEL-GroES system forms a nano-cage that allows encapsulation of the non-native substrate proteins and provides a physical environment optimized to promote and accelerate protein folding. The protein is Chaperonin GroEL of Bacillus thuringiensis (strain Al Hakam).